We begin with the raw amino-acid sequence, 78 residues long: Omega-conotoxin-like ArMKLT1-011 (78 aa).

The N-terminal stretch at 1-22 (MKLTCMMIVAVLFLTAWTSVTA) is a signal peptide. A propeptide spanning residues 23–48 (VNTRGELENLFLRASHEMNSEASKLD) is cleaved from the precursor. 3 disulfide bridges follow: Cys-52/Cys-69, Cys-59/Cys-73, and Cys-68/Cys-77.

It belongs to the conotoxin O1 superfamily. Expressed by the venom duct.

Its subcellular location is the secreted. Omega-conotoxins act at presynaptic membranes, they bind and block voltage-gated calcium channels (Cav). This is Omega-conotoxin-like ArMKLT1-011 from Conus arenatus (Sand-dusted cone).